The chain runs to 112 residues: Peptidyl-tRNA hydrolase (112 aa).

This sequence belongs to the PTH2 family.

The protein resides in the cytoplasm. It carries out the reaction an N-acyl-L-alpha-aminoacyl-tRNA + H2O = an N-acyl-L-amino acid + a tRNA + H(+). The natural substrate for this enzyme may be peptidyl-tRNAs which drop off the ribosome during protein synthesis. In Methanothermobacter thermautotrophicus (strain ATCC 29096 / DSM 1053 / JCM 10044 / NBRC 100330 / Delta H) (Methanobacterium thermoautotrophicum), this protein is Peptidyl-tRNA hydrolase.